The sequence spans 238 residues: Survival of motor neuron-related-splicing factor 30 (238 aa).

The Tudor domain occupies 72 to 132 (SWKVGDKCMA…KPVEEGRKAK (61 aa)). The Nuclear localization signal motif lies at 142–160 (KKEMIAQQREYKKKKALKK). Phosphoserine is present on Ser201. Lys219 bears the N6-acetyllysine mark.

Belongs to the SMN family. As to quaternary structure, associates with spliceosomes. Associates with U4/U5/U6 tri-snRNP and with U2 snRNP.

The protein resides in the nucleus speckle. Its subcellular location is the nucleus. It is found in the cajal body. In terms of biological role, involved in spliceosome assembly. The sequence is that of Survival of motor neuron-related-splicing factor 30 (SMNDC1) from Pongo abelii (Sumatran orangutan).